A 439-amino-acid chain; its full sequence is GTPase Der (439 aa).

2 EngA-type G domains span residues 3–167 (PLVA…PKSS) and 176–351 (TRIA…AQYS). Residues 9–16 (GRPNVGKS), 56–60 (DTGGF), 119–122 (NKVD), 182–189 (GRPNVGKS), 229–233 (DTAGI), and 294–297 (NKWD) each bind GTP. The region spanning 352–436 (KRVSTSDLNR…PLKIIFRGRD (85 aa)) is the KH-like domain.

Belongs to the TRAFAC class TrmE-Era-EngA-EngB-Septin-like GTPase superfamily. EngA (Der) GTPase family. As to quaternary structure, associates with the 50S ribosomal subunit.

Functionally, GTPase that plays an essential role in the late steps of ribosome biogenesis. The chain is GTPase Der from Geobacter metallireducens (strain ATCC 53774 / DSM 7210 / GS-15).